The chain runs to 278 residues: Large ribosomal subunit protein uL2 (278 aa).

3 disordered regions span residues 1–20, 25–58, and 223–278; these read MGIR…SVSD, TRST…GGGH, and GVVM…GKKR. Residues 37-58 show a composition bias toward basic residues; the sequence is LHGKGGRNAHGRITTRHKGGGH. Residues 253–268 are compositionally biased toward basic and acidic residues; the sequence is PEGRTRKPNKPSDKLI. Positions 269 to 278 are enriched in basic residues; it reads VRRRRTGKKR.

This sequence belongs to the universal ribosomal protein uL2 family. As to quaternary structure, part of the 50S ribosomal subunit. Forms a bridge to the 30S subunit in the 70S ribosome.

In terms of biological role, one of the primary rRNA binding proteins. Required for association of the 30S and 50S subunits to form the 70S ribosome, for tRNA binding and peptide bond formation. It has been suggested to have peptidyltransferase activity; this is somewhat controversial. Makes several contacts with the 16S rRNA in the 70S ribosome. The chain is Large ribosomal subunit protein uL2 from Mycolicibacterium smegmatis (strain ATCC 700084 / mc(2)155) (Mycobacterium smegmatis).